A 443-amino-acid polypeptide reads, in one-letter code: ATP-dependent protease ATPase subunit HslU (443 aa).

ATP-binding positions include Ile19 and 61–66 (GVGKTE). Positions 139-158 (PPRDIGFSQPEEKDSNTRQV) are disordered. Positions 256, 321, and 393 each coordinate ATP.

Belongs to the ClpX chaperone family. HslU subfamily. As to quaternary structure, a double ring-shaped homohexamer of HslV is capped on each side by a ring-shaped HslU homohexamer. The assembly of the HslU/HslV complex is dependent on binding of ATP.

Its subcellular location is the cytoplasm. Functionally, ATPase subunit of a proteasome-like degradation complex; this subunit has chaperone activity. The binding of ATP and its subsequent hydrolysis by HslU are essential for unfolding of protein substrates subsequently hydrolyzed by HslV. HslU recognizes the N-terminal part of its protein substrates and unfolds these before they are guided to HslV for hydrolysis. The polypeptide is ATP-dependent protease ATPase subunit HslU (Cupriavidus taiwanensis (strain DSM 17343 / BCRC 17206 / CCUG 44338 / CIP 107171 / LMG 19424 / R1) (Ralstonia taiwanensis (strain LMG 19424))).